A 311-amino-acid polypeptide reads, in one-letter code: tRNA-cytidine(32) 2-sulfurtransferase (311 aa).

Positions 47–52 (SGGKDS) match the PP-loop motif motif. Cys-122, Cys-125, and Cys-213 together coordinate [4Fe-4S] cluster.

The protein belongs to the TtcA family. As to quaternary structure, homodimer. Requires Mg(2+) as cofactor. [4Fe-4S] cluster is required as a cofactor.

The protein localises to the cytoplasm. The catalysed reaction is cytidine(32) in tRNA + S-sulfanyl-L-cysteinyl-[cysteine desulfurase] + AH2 + ATP = 2-thiocytidine(32) in tRNA + L-cysteinyl-[cysteine desulfurase] + A + AMP + diphosphate + H(+). It functions in the pathway tRNA modification. In terms of biological role, catalyzes the ATP-dependent 2-thiolation of cytidine in position 32 of tRNA, to form 2-thiocytidine (s(2)C32). The sulfur atoms are provided by the cysteine/cysteine desulfurase (IscS) system. The protein is tRNA-cytidine(32) 2-sulfurtransferase of Shigella dysenteriae serotype 1 (strain Sd197).